A 1074-amino-acid chain; its full sequence is MARQDRLRELLGPLHPYKSDDEEEDCAQEEEGEQEEEFVDAEELCSGGIKAGSLPGRARVSIPDEYTKEKCTVYGRFPLKGPWWRVKVQVLKPQRSRSYQVQGFPAYFLQVDMSPPDQKQICSLFLKECNLASERIQEFLKWVEKVSSFENLHFENLWETLRLFYRETEKKDKKLSTPREQQGEEMRVEKSFAFISAMVALQFPKVMEFLPSLFPRHFKRLISSSSDWVLGCIEDVLGTQPWKLGFRRITYREMKLVRCEASWTAFSQCPSLLQLMTPLQKNALVIYSKLRQTCREDGHTYIEVKDLTSGLSEHMSFEEACQSLAFLKDIDVVIYEKDYVFLSELYEAEQDIASSICELMSRPPWHLKVDVKNVLASIRGAKPNDPGSAEAVEGSKPEEVGSEQGDSVLDAQDGDDHVRSNGEHVANAEINDVPLDQDQVVALETICANAVTVLSGKGGCGKTTIVSRLFKHMEHLEETEVQQACEDFEQDQEASEEWLDCPKQSPAGVDKAVEVLLTAPTGKAAGLLRQRTDLPAYTLCQVNYSFYMWKTKNEVDKPWKFSTVRVLVVDEGSLVSVGIFKSVLQLLCKHSKLSKLIILGDVRQLPSIEPGNMLQDVFETLKSRQCAIELKTNHRTESQLIVDNATRISRRQFPKFDAELNICGNPTLPLSIQDKTFIFVRLPEEDSRSQSSKGEHRSNLYTAVKTLLQGKDFCSFESSKTSQFIAFRRQDCDLINDCCCKHYTGHLIKDHEKKLIFAVGDKICCTRNAYLSDLLPDKDQEAEGKGYGDAPDDDAKIKQDFESSTRLCNGEIFFITRDVTDVTFKRKRLLTINNEAGLEVTVDFSKLMANCQIKHAWARTIHTFQGSEENTVVYVVGKAGRQHWQHVYTAVTRGRSRVYIIAQESELRSATRKRGFPRQTRLKHFLQKKLSGSCAPSTGFASQPSSPRVGGRPDTQPPASHLCRTPDNKATADSARGDERWLSASVNDDVDTDEESAQLRGSKRIGDGFPFDEESPSKFRMVEAPSPQVSSVFQNMRLNTLTPRQLFKPTDNQDTGTAGVADDANDPSNQEMEM.

Disordered stretches follow at residues 1–38 (MARQ…EEEF), 380–420 (GAKP…HVRS), and 932–1014 (GSCA…FDEE). A compositionally biased stretch (acidic residues) spans 20–38 (DDEEEDCAQEEEGEQEEEF). Over residues 934–946 (CAPSTGFASQPSS) the composition is skewed to polar residues. 2 positions are modified to phosphoserine: S942 and S946. T992 carries the phosphothreonine modification. 2 positions are modified to phosphoserine: S1015 and S1026. Positions 1022–1046 (VEAPSPQVSSVFQNMRLNTLTPRQL) match the Nuclear export signal motif. The segment at 1040–1074 (TLTPRQLFKPTDNQDTGTAGVADDANDPSNQEMEM) is disordered.

The protein belongs to the RecD family. HELB subfamily. Binds to RPA1; this interaction promotes HELB recruitment to chromatin following DNA damage. Interacts with at least two subunits of the DNA polymerase alpha complex. Interacts with CDC45. Interacts with TOPB1. In terms of processing, phosphorylated at Ser-942 by CDK2 during the G1/S transition, resulting in its nuclear export into the cytoplasm. As S phase progresses, its exclusion from the nucleus promotes the activation of long-range resection.

It localises to the nucleus. It is found in the cytoplasm. The protein resides in the chromosome. It carries out the reaction ATP + H2O = ADP + phosphate + H(+). In terms of biological role, 5'-3' DNA helicase involved in DNA damage response by acting as an inhibitor of DNA end resection. Recruitment to single-stranded DNA (ssDNA) following DNA damage leads to inhibit the nucleases catalyzing resection, such as EXO1, BLM and DNA2, possibly via the 5'-3' ssDNA translocase activity of HELB. As cells approach S phase, DNA end resection is promoted by the nuclear export of HELB following phosphorylation. Acts independently of TP53BP1. Unwinds duplex DNA with 5'-3' polarity. Has single-strand DNA-dependent ATPase and DNA helicase activities. Prefers ATP and dATP as substrates. During S phase, may facilitate cellular recovery from replication stress. This Mus musculus (Mouse) protein is DNA helicase B.